We begin with the raw amino-acid sequence, 287 residues long: MELWPGAGTLLLLLFLLLLLLLPTLWFCSPSAKYFFKMAFYNGWILFLAVLAIPVCAVRGRNVENMKILRLMLLHIKYLYGIRVEVRGAHHFPPSQPYVVVSNHQSSLDLLGMMEVLPGHCVPIAKRELLWAGSAGLACWLAGVIFIDRKRTGDAISVMSEVAQTLLTQDVRVWVFPEGTRNHNGSMLPFKRGAFHLAVQAQVPIVPIVMSSYQDFYCKKERRFTSGRCQVRVLPPVPTEGLKPDDVPALADRVRHSMLTVFREISTDGRGGGDYLKKPGGVGEAGL.

Residues 1-26 (MELWPGAGTLLLLLFLLLLLLLPTLW) form the signal peptide. Topologically, residues 27-37 (FCSPSAKYFFK) are lumenal. Residues 38–58 (MAFYNGWILFLAVLAIPVCAV) form a helical membrane-spanning segment. The Cytoplasmic segment spans residues 59-127 (RGRNVENMKI…PGHCVPIAKR (69 aa)). An HXXXXD motif motif is present at residues 104-109 (HQSSLD). Residues 128-148 (ELLWAGSAGLACWLAGVIFID) traverse the membrane as a helical segment. Over 149–192 (RKRTGDAISVMSEVAQTLLTQDVRVWVFPEGTRNHNGSMLPFKR) the chain is Lumenal. The EGTR motif signature appears at 178-181 (EGTR).

The protein belongs to the 1-acyl-sn-glycerol-3-phosphate acyltransferase family.

The protein localises to the endoplasmic reticulum membrane. It catalyses the reaction a 1-acyl-sn-glycero-3-phosphate + an acyl-CoA = a 1,2-diacyl-sn-glycero-3-phosphate + CoA. It carries out the reaction 1-(9Z-octadecenoyl)-sn-glycero-3-phosphate + (9Z)-octadecenoyl-CoA = 1,2-di-(9Z-octadecenoyl)-sn-glycero-3-phosphate + CoA. The enzyme catalyses 1-(9Z-octadecenoyl)-sn-glycero-3-phosphate + hexadecanoyl-CoA = 1-(9Z)-octadecenoyl-2-hexadecanoyl-sn-glycero-3-phosphate + CoA. The catalysed reaction is heptadecanoyl-CoA + 1-(9Z-octadecenoyl)-sn-glycero-3-phosphate = 1-(9Z)-octadecenoyl-2-heptadecanoyl-sn-glycero-3-phosphate + CoA. It catalyses the reaction 1-(9Z-octadecenoyl)-sn-glycero-3-phosphate + octadecanoyl-CoA = 1-(9Z-octadecenoyl)-2-octadecanoyl-sn-glycero-3-phosphate + CoA. It carries out the reaction 1-(9Z-octadecenoyl)-sn-glycero-3-phosphate + (9Z,12Z)-octadecadienoyl-CoA = 1-(9Z)-octadecenoyl-2-(9Z,12Z)-octadecadienoyl-sn-glycero-3-phosphate + CoA. The enzyme catalyses 1-(9Z-octadecenoyl)-sn-glycero-3-phosphate + tetradecanoyl-CoA = 1-(9Z)-octadecenoyl-2-tetradecanoyl-sn-glycero-3-phosphate + CoA. The catalysed reaction is pentadecanoyl-CoA + 1-(9Z-octadecenoyl)-sn-glycero-3-phosphate = 1-(9Z)-octadecenoyl-2-pentadecanoyl-sn-glycero-3-phosphate + CoA. It catalyses the reaction 1-hexadecanoyl-sn-glycero-3-phosphate + (9Z)-octadecenoyl-CoA = 1-hexadecanoyl-2-(9Z-octadecenoyl)-sn-glycero-3-phosphate + CoA. It carries out the reaction 1-(9Z,12Z,15Z)-octadecatrienoyl-sn-glycero-3-phosphate + (9Z)-octadecenoyl-CoA = 1-(9Z,12Z,15Z)-octadecatrienoyl-2-(9Z)-octadecenoyl-sn-glycero-3-phosphate + CoA. The enzyme catalyses 1-(6Z,9Z,12Z-octadecatrienoyl)-sn-glycero-3-phosphate + (9Z)-octadecenoyl-CoA = (6Z,9Z,12Z)-octadecatrienoyl-2-(9Z)-octadecenoyl-sn-glycero-3-phosphate + CoA. The catalysed reaction is 1-eicosanoyl-sn-glycero-3-phosphate + (9Z)-octadecenoyl-CoA = 1-eicosanoyl-2-(9Z)-octadecenoyl-sn-glycero-3-phosphate + CoA. It catalyses the reaction 1-tetradecanoyl-sn-glycerol 3-phosphate + (9Z)-octadecenoyl-CoA = 1-tetradecanoyl-2-(9Z)-octadecenoyl-sn-glycero-3-phosphate + CoA. It carries out the reaction 1-(9Z-octadecenoyl)-sn-glycero-3-phosphate + (5Z,8Z,11Z,14Z)-eicosatetraenoyl-CoA = 1-(9Z)-octadecenoyl-2-(5Z,8Z,11Z,14Z)-eicosatetraenoyl-sn-glycero-3-phosphate + CoA. The enzyme catalyses 1-(9Z-octadecenoyl)-sn-glycero-3-phosphate + dodecanoyl-CoA = 1-(9Z)-octadecenoyl-2-dodecanoyl-sn-glycero-3-phosphate + CoA. The catalysed reaction is (6Z)-octadecenoyl-CoA + 1-(9Z-octadecenoyl)-sn-glycero-3-phosphate = 1-(9Z)-octadecenoyl-2-(6Z)-octadecenoyl-sn-glycero-3-phosphate + CoA. It catalyses the reaction (11Z)-octadecenoyl-CoA + 1-(9Z-octadecenoyl)-sn-glycero-3-phosphate = 1-(9Z)-octadecenoyl-2-(11Z)-octadecenoyl-sn-glycero-3-phosphate + CoA. It carries out the reaction (9Z)-hexadecenoyl-CoA + 1-(9Z-octadecenoyl)-sn-glycero-3-phosphate = 1-(9Z-octadecenoyl)-2-(9Z-hexadecenoyl)-sn-glycero-3-phosphate + CoA. It participates in phospholipid metabolism; CDP-diacylglycerol biosynthesis; CDP-diacylglycerol from sn-glycerol 3-phosphate: step 2/3. Functionally, converts 1-acyl-sn-glycerol-3-phosphate (lysophosphatidic acid or LPA) into 1,2-diacyl-sn-glycerol-3-phosphate (phosphatidic acid or PA) by incorporating an acyl moiety at the sn-2 position of the glycerol backbone. The protein is 1-acyl-sn-glycerol-3-phosphate acyltransferase alpha (AGPAT1) of Ovis aries (Sheep).